Consider the following 874-residue polypeptide: Alanine--tRNA ligase (874 aa).

Zn(2+) is bound by residues His564, His568, Cys665, and His669.

It belongs to the class-II aminoacyl-tRNA synthetase family. It depends on Zn(2+) as a cofactor.

Its subcellular location is the cytoplasm. It catalyses the reaction tRNA(Ala) + L-alanine + ATP = L-alanyl-tRNA(Ala) + AMP + diphosphate. Its function is as follows. Catalyzes the attachment of alanine to tRNA(Ala) in a two-step reaction: alanine is first activated by ATP to form Ala-AMP and then transferred to the acceptor end of tRNA(Ala). Also edits incorrectly charged Ser-tRNA(Ala) and Gly-tRNA(Ala) via its editing domain. The chain is Alanine--tRNA ligase from Cupriavidus metallidurans (strain ATCC 43123 / DSM 2839 / NBRC 102507 / CH34) (Ralstonia metallidurans).